Consider the following 79-residue polypeptide: MTDVKKNENMTFEEAMKKLEEIVEKLEEGNVPLEEAIAFFQEGMKLSKLCHDKLQHVEKQLEYMLREDGELVPFSPEEE.

Belongs to the XseB family. In terms of assembly, heterooligomer composed of large and small subunits.

It is found in the cytoplasm. The catalysed reaction is Exonucleolytic cleavage in either 5'- to 3'- or 3'- to 5'-direction to yield nucleoside 5'-phosphates.. In terms of biological role, bidirectionally degrades single-stranded DNA into large acid-insoluble oligonucleotides, which are then degraded further into small acid-soluble oligonucleotides. The chain is Exodeoxyribonuclease 7 small subunit from Geobacillus kaustophilus (strain HTA426).